Reading from the N-terminus, the 312-residue chain is Methionyl-tRNA formyltransferase (312 aa).

112 to 115 lines the (6S)-5,6,7,8-tetrahydrofolate pocket; it reads SLLP.

This sequence belongs to the Fmt family.

It catalyses the reaction L-methionyl-tRNA(fMet) + (6R)-10-formyltetrahydrofolate = N-formyl-L-methionyl-tRNA(fMet) + (6S)-5,6,7,8-tetrahydrofolate + H(+). Functionally, attaches a formyl group to the free amino group of methionyl-tRNA(fMet). The formyl group appears to play a dual role in the initiator identity of N-formylmethionyl-tRNA by promoting its recognition by IF2 and preventing the misappropriation of this tRNA by the elongation apparatus. This chain is Methionyl-tRNA formyltransferase, found in Syntrophus aciditrophicus (strain SB).